We begin with the raw amino-acid sequence, 156 residues long: MKFILYNLATAKEPWADEVSELYKKKISFFIPFDIQSLKAKKSAREDADFKRNEESELILKNINSDDYVVLFDERGSVLDSIQFSKKVENILGSSKKRAIFIIGGAFGVNEEVRKRADLKVALSPMVMNHLMAQAMSLEQIYRAFTIIKKIPYHNI.

S-adenosyl-L-methionine contacts are provided by residues glycine 104 and 123–128 (LSPMVM).

This sequence belongs to the RNA methyltransferase RlmH family. As to quaternary structure, homodimer.

It localises to the cytoplasm. The catalysed reaction is pseudouridine(1915) in 23S rRNA + S-adenosyl-L-methionine = N(3)-methylpseudouridine(1915) in 23S rRNA + S-adenosyl-L-homocysteine + H(+). Specifically methylates the pseudouridine at position 1915 (m3Psi1915) in 23S rRNA. The sequence is that of Ribosomal RNA large subunit methyltransferase H from Bdellovibrio bacteriovorus (strain ATCC 15356 / DSM 50701 / NCIMB 9529 / HD100).